The chain runs to 511 residues: Glucans biosynthesis protein G (511 aa).

Positions 1–22 (MMKMRWLSAAVMLTLYTSSSWA) are cleaved as a signal peptide.

It belongs to the OpgD/OpgG family.

The protein localises to the periplasm. Its pathway is glycan metabolism; osmoregulated periplasmic glucan (OPG) biosynthesis. In terms of biological role, involved in the biosynthesis of osmoregulated periplasmic glucans (OPGs). This is Glucans biosynthesis protein G from Escherichia coli O8 (strain IAI1).